Reading from the N-terminus, the 1673-residue chain is Protein TIC 214 (1673 aa).

6 consecutive transmembrane segments (helical) span residues 18–38 (IINS…FSIG), 67–87 (FITG…HLAL), 90–110 (PHTI…CNTH), 127–147 (LSIQ…HFIL), 175–195 (VGWI…VVWI), and 218–238 (SMSI…YYLG).

The protein belongs to the TIC214 family. In terms of assembly, part of the Tic complex.

The protein localises to the plastid. It is found in the chloroplast inner membrane. Its function is as follows. Involved in protein precursor import into chloroplasts. May be part of an intermediate translocation complex acting as a protein-conducting channel at the inner envelope. This chain is Protein TIC 214, found in Lactuca sativa (Garden lettuce).